The following is a 79-amino-acid chain: DNA-directed RNA polymerase subunit omega (79 aa).

Belongs to the RNA polymerase subunit omega family. As to quaternary structure, in cyanobacteria the RNAP catalytic core is composed of 2 alpha, 1 beta, 1 beta', 1 gamma and 1 omega subunit. When a sigma factor is associated with the core the holoenzyme is formed, which can initiate transcription.

The catalysed reaction is RNA(n) + a ribonucleoside 5'-triphosphate = RNA(n+1) + diphosphate. Promotes RNA polymerase assembly. Latches the N- and C-terminal regions of the beta' subunit thereby facilitating its interaction with the beta and alpha subunits. The chain is DNA-directed RNA polymerase subunit omega from Synechococcus sp. (strain JA-3-3Ab) (Cyanobacteria bacterium Yellowstone A-Prime).